Reading from the N-terminus, the 462-residue chain is Argininosuccinate lyase (462 aa).

This sequence belongs to the lyase 1 family. Argininosuccinate lyase subfamily.

It is found in the cytoplasm. The catalysed reaction is 2-(N(omega)-L-arginino)succinate = fumarate + L-arginine. The protein operates within amino-acid biosynthesis; L-arginine biosynthesis; L-arginine from L-ornithine and carbamoyl phosphate: step 3/3. The polypeptide is Argininosuccinate lyase (Xanthobacter autotrophicus (strain ATCC BAA-1158 / Py2)).